The chain runs to 133 residues: ATP synthase epsilon chain, chloroplastic (133 aa).

This sequence belongs to the ATPase epsilon chain family. As to quaternary structure, F-type ATPases have 2 components, CF(1) - the catalytic core - and CF(0) - the membrane proton channel. CF(1) has five subunits: alpha(3), beta(3), gamma(1), delta(1), epsilon(1). CF(0) has three main subunits: a, b and c.

The protein resides in the plastid. Its subcellular location is the chloroplast thylakoid membrane. Its function is as follows. Produces ATP from ADP in the presence of a proton gradient across the membrane. In Cyanidium caldarium (Red alga), this protein is ATP synthase epsilon chain, chloroplastic.